The primary structure comprises 286 residues: 4-diphosphocytidyl-2-C-methyl-D-erythritol kinase (286 aa).

K12 is a catalytic residue. 96 to 106 is an ATP binding site; it reads PHGAGLGGGSA. D138 is an active-site residue.

This sequence belongs to the GHMP kinase family. IspE subfamily.

The enzyme catalyses 4-CDP-2-C-methyl-D-erythritol + ATP = 4-CDP-2-C-methyl-D-erythritol 2-phosphate + ADP + H(+). It functions in the pathway isoprenoid biosynthesis; isopentenyl diphosphate biosynthesis via DXP pathway; isopentenyl diphosphate from 1-deoxy-D-xylulose 5-phosphate: step 3/6. In terms of biological role, catalyzes the phosphorylation of the position 2 hydroxy group of 4-diphosphocytidyl-2C-methyl-D-erythritol. In Nitratidesulfovibrio vulgaris (strain DP4) (Desulfovibrio vulgaris), this protein is 4-diphosphocytidyl-2-C-methyl-D-erythritol kinase.